The chain runs to 617 residues: Acetolactate synthase large subunit (617 aa).

Glu-71 contributes to the thiamine diphosphate binding site. FAD is bound by residues Arg-173, 281-302 (HGTA…VGAR), and 324-343 (EIDP…VLGD). The thiamine pyrophosphate binding stretch occupies residues 413–492 (QHQMWAAQHL…VKVVIVNNHW (80 aa)). Mg(2+)-binding residues include Asp-463 and Asn-490.

It belongs to the TPP enzyme family. As to quaternary structure, dimer of large and small chains. Mg(2+) is required as a cofactor. Requires thiamine diphosphate as cofactor.

It carries out the reaction 2 pyruvate + H(+) = (2S)-2-acetolactate + CO2. The protein operates within amino-acid biosynthesis; L-isoleucine biosynthesis; L-isoleucine from 2-oxobutanoate: step 1/4. It participates in amino-acid biosynthesis; L-valine biosynthesis; L-valine from pyruvate: step 1/4. This chain is Acetolactate synthase large subunit (ilvB), found in Parasynechococcus marenigrum (strain WH8102).